The primary structure comprises 445 residues: Phosphoglucosamine mutase (445 aa).

The Phosphoserine intermediate role is filled by Ser-102. Positions 102, 241, 243, and 245 each coordinate Mg(2+). Ser-102 is modified (phosphoserine).

Belongs to the phosphohexose mutase family. Mg(2+) serves as cofactor. In terms of processing, activated by phosphorylation.

The enzyme catalyses alpha-D-glucosamine 1-phosphate = D-glucosamine 6-phosphate. In terms of biological role, catalyzes the conversion of glucosamine-6-phosphate to glucosamine-1-phosphate. This is Phosphoglucosamine mutase from Citrobacter koseri (strain ATCC BAA-895 / CDC 4225-83 / SGSC4696).